We begin with the raw amino-acid sequence, 275 residues long: 2,3,4,5-tetrahydropyridine-2,6-dicarboxylate N-succinyltransferase (275 aa).

This sequence belongs to the transferase hexapeptide repeat family.

The protein resides in the cytoplasm. The catalysed reaction is (S)-2,3,4,5-tetrahydrodipicolinate + succinyl-CoA + H2O = (S)-2-succinylamino-6-oxoheptanedioate + CoA. It participates in amino-acid biosynthesis; L-lysine biosynthesis via DAP pathway; LL-2,6-diaminopimelate from (S)-tetrahydrodipicolinate (succinylase route): step 1/3. The protein is 2,3,4,5-tetrahydropyridine-2,6-dicarboxylate N-succinyltransferase of Paraburkholderia phytofirmans (strain DSM 17436 / LMG 22146 / PsJN) (Burkholderia phytofirmans).